Here is a 290-residue protein sequence, read N- to C-terminus: Endonuclease 2 (290 aa).

Positions 1 to 27 (MANQKGLHVVMMIITVWLLYAAPNIHG) are cleaved as a signal peptide. 2 residues coordinate a divalent metal cation: tryptophan 28 and histidine 33. 28–33 (WGKEGH) lines the substrate pocket. Cysteine 37 and cysteine 68 form a disulfide bridge. A divalent metal cation contacts are provided by aspartate 72 and histidine 85. Substrate is bound by residues 72 to 76 (DRVKF), 85 to 88 (HYIN), and 94 to 99 (SYQYNR). Cystine bridges form between cysteine 93–cysteine 245, cysteine 101–cysteine 111, and cysteine 226–cysteine 232. Substrate contacts are provided by asparagine 118 and tyrosine 136. N-linked (GlcNAc...) asparagine glycosylation is present at asparagine 118. N-linked (GlcNAc...) asparagine glycosylation is present at asparagine 137. Histidine 147, aspartate 151, histidine 157, histidine 181, and aspartate 185 together coordinate a divalent metal cation. A substrate binding region spans residues 147–196 (HFMGDIHQPLHVSYASDKGGNTIEVHWYTRKANLHHIWDSNIIETAEADL). Asparagine 211 carries an N-linked (GlcNAc...) asparagine glycan. The propeptide at 283–290 (ATLNRIFG) is removed in mature form.

Belongs to the nuclease type I family. As to quaternary structure, monomer. Mn(2+) is required as a cofactor. The cofactor is Ca(2+). It depends on Zn(2+) as a cofactor. N-glycosylation is required for enzymatic stability and activity.

The enzyme catalyses Endonucleolytic cleavage to 5'-phosphomononucleotide and 5'-phosphooligonucleotide end-products.. Its activity is regulated as follows. ssDNase activity is inhibited by the divalent cation chelator EDTA and the reducing agent DTT. Divalent metal ions (e.g. Ca(2+), Mg(2+) and Zn(2+)) and DTT represses RNase activity. RNase activity is enhanced by EDTA. Also repressed by vanadate (VO(4)(3-)) and phosphate (PO(4)(3-)) by occupying the active site. Its function is as follows. Endonuclease mostly active on RNA and ssDNA, and to a lower extent, on dsDNA. Can cleave mismatch regions in heteroduplex DNA containing single base pair mismatches or insertion/deletion bases. In contradiction with PubMed:22506810, cannot hydrolyze single-stranded DNA and does not cleave mismatches. This Arabidopsis thaliana (Mouse-ear cress) protein is Endonuclease 2.